A 317-amino-acid chain; its full sequence is Zinc finger protein 771 (317 aa).

A compositionally biased stretch (acidic residues) spans 1–17; sequence MPGEQQAEEEEEEEMQE. The disordered stretch occupies residues 1–63; it reads MPGEQQAEEE…APSADPARPH (63 aa). Lys33 participates in a covalent cross-link: Glycyl lysine isopeptide (Lys-Gly) (interchain with G-Cter in SUMO2). A compositionally biased stretch (basic and acidic residues) spans 33 to 49; that stretch reads KYEVVKLKIPMDNKEVP. 8 C2H2-type zinc fingers span residues 63–85, 91–113, 119–141, 147–169, 175–197, 203–225, 231–253, and 259–281; these read HACP…ARTH, FGCT…GRTH, YECP…RRRH, YACA…LRVH, YACP…RRTH, YACA…RRVH, HRCA…ARTH, and YPCA…RRAH.

Belongs to the krueppel C2H2-type zinc-finger protein family.

The protein resides in the nucleus. May be involved in transcriptional regulation. The protein is Zinc finger protein 771 (ZNF771) of Homo sapiens (Human).